Here is a 683-residue protein sequence, read N- to C-terminus: Leishmanolysin-like peptidase (683 aa).

Position 257 (His-257) interacts with Zn(2+). Glu-258 is an active-site residue. 2 residues coordinate Zn(2+): His-261 and His-364.

Belongs to the peptidase M8 family. The cofactor is Zn(2+).

Its subcellular location is the cytoplasm. Essential for the coordination of mitotic progression, and also plays a role in cell migration. The protein is Leishmanolysin-like peptidase (Invadolysin) of Drosophila melanogaster (Fruit fly).